The chain runs to 149 residues: Endonuclease I (149 aa).

As to quaternary structure, homodimer.

The catalysed reaction is Endonucleolytic cleavage to 5'-phosphooligonucleotide end-products.. Functionally, junction-resolving enzyme that selectively binds and cleaves four-way (Holliday) DNA junctions present after viral genomic replication. These intermediates are created during DNA repair, processing of stalled replication forks and homologous genetic recombination. Introduces two nicks on the two non-crossing strands, at 5' sides of the junction. Also participates together with gp6 in the degradation of host chromosome to provide nucleotides for phage DNA synthesis. In Escherichia coli (Bacteriophage T7), this protein is Endonuclease I.